The following is a 328-amino-acid chain: 4-hydroxythreonine-4-phosphate dehydrogenase (328 aa).

Thr125 serves as a coordination point for substrate. The a divalent metal cation site is built by His160, His203, and His269. Substrate is bound by residues Lys277, Asn286, and Arg295.

The protein belongs to the PdxA family. In terms of assembly, homodimer. A divalent metal cation serves as cofactor.

It is found in the cytoplasm. The enzyme catalyses 4-(phosphooxy)-L-threonine + NAD(+) = 3-amino-2-oxopropyl phosphate + CO2 + NADH. It functions in the pathway cofactor biosynthesis; pyridoxine 5'-phosphate biosynthesis; pyridoxine 5'-phosphate from D-erythrose 4-phosphate: step 4/5. Catalyzes the NAD(P)-dependent oxidation of 4-(phosphooxy)-L-threonine (HTP) into 2-amino-3-oxo-4-(phosphooxy)butyric acid which spontaneously decarboxylates to form 3-amino-2-oxopropyl phosphate (AHAP). This chain is 4-hydroxythreonine-4-phosphate dehydrogenase, found in Synechococcus sp. (strain RCC307).